The primary structure comprises 384 residues: MTVTLGMPAAPPRPVGTRRLSRQIHVGNVPVGGDAPVSIQSMCTTLTSDVNATLQQIAQLTAAGCQIVRVAVPSQDDADALPTIARKSPIPIIADIHFQPKYVFAAIDAGCAAVRVNPGNIKQFDDKVGEIARAAKAAGTPIRIGVNAGSLDKRLLEKYGKATPEALVESALWEASLFEEHDFRDIKISVKHNDPVIMIQAYRLLAQACDYPLHLGVTEAGPAFQGTVKSAVAFGALLSEGIGDTIRVSLSAPPIEEIKVASAILESLGLRERKLEIVSCPSCGRAQVDVYTLANEVSAGLEGMEVPLRVAVMGCVVNGPGEAREADLGVASGNGKGQIFVRGKVIKTVPEAQIVETLIEEAMRLAEQMEADGAASGSPSVSVA.

[4Fe-4S] cluster-binding residues include Cys-280, Cys-283, Cys-315, and Glu-322.

Belongs to the IspG family. [4Fe-4S] cluster is required as a cofactor.

The catalysed reaction is (2E)-4-hydroxy-3-methylbut-2-enyl diphosphate + oxidized [flavodoxin] + H2O + 2 H(+) = 2-C-methyl-D-erythritol 2,4-cyclic diphosphate + reduced [flavodoxin]. It functions in the pathway isoprenoid biosynthesis; isopentenyl diphosphate biosynthesis via DXP pathway; isopentenyl diphosphate from 1-deoxy-D-xylulose 5-phosphate: step 5/6. In terms of biological role, converts 2C-methyl-D-erythritol 2,4-cyclodiphosphate (ME-2,4cPP) into 1-hydroxy-2-methyl-2-(E)-butenyl 4-diphosphate. The polypeptide is 4-hydroxy-3-methylbut-2-en-1-yl diphosphate synthase (flavodoxin) (Parafrankia sp. (strain EAN1pec)).